Reading from the N-terminus, the 504-residue chain is uncharacterized protein (504 aa).

Disordered stretches follow at residues 1 to 59 and 171 to 255; these read MSSS…KNEY and GVNS…NQRL. Composition is skewed to basic and acidic residues over residues 36-50 and 199-212; these read KPID…KEIG and RAET…ESRQ. Over residues 213–232 the composition is skewed to polar residues; the sequence is SNRGNNDNGDQRMTSKATTR.

This is an uncharacterized protein from Caenorhabditis elegans.